Reading from the N-terminus, the 625-residue chain is Interferon-induced GTP-binding protein Mx2 (625 aa).

The Dynamin-type G domain occupies 29–302; the sequence is DLALPAIAVI…LVFHIGRCLP (274 aa). Positions 39-46 are G1 motif; sequence GDQSSGKS. A GTP-binding site is contributed by 39 to 46; the sequence is GDQSSGKS. The segment at 64-66 is G2 motif; that stretch reads VTR. The tract at residues 140-143 is G3 motif; the sequence is DLPG. GTP is bound by residues 140–144 and 209–212; these read DLPGI and TKPD. The G4 motif stretch occupies residues 209 to 212; that stretch reads TKPD. The interval 241-244 is G5 motif; that stretch reads RCRG. The GED domain occupies 539 to 625; the sequence is REELTCHLKS…TEALKYLAKF (87 aa).

It belongs to the TRAFAC class dynamin-like GTPase superfamily. Dynamin/Fzo/YdjA family.

It is found in the cytoplasm. The chain is Interferon-induced GTP-binding protein Mx2 (mx2) from Ictalurus punctatus (Channel catfish).